A 145-amino-acid chain; its full sequence is Basic phospholipase A2 Vb-2 (145 aa).

An N-terminal signal peptide occupies residues 1-19; the sequence is MNPAHLLVLLAVCVSLLGA. Residues 20 to 27 constitute a propeptide that is removed on maturation; it reads ANIPPQPL. 7 cysteine pairs are disulfide-bonded: Cys38–Cys97, Cys52–Cys144, Cys54–Cys70, Cys69–Cys125, Cys76–Cys118, Cys86–Cys111, and Cys104–Cys116. Ca(2+) contacts are provided by Tyr53, Gly55, and Gly57. His73 is a catalytic residue. Residue Asp74 participates in Ca(2+) binding. The active site involves Asp119.

Ca(2+) serves as cofactor. In terms of tissue distribution, expressed by the venom gland.

It is found in the secreted. It catalyses the reaction a 1,2-diacyl-sn-glycero-3-phosphocholine + H2O = a 1-acyl-sn-glycero-3-phosphocholine + a fatty acid + H(+). Functionally, snake venom phospholipase A2 (PLA2) that has only a weak enzymatic activity. Inhibits neuromuscular transmission by blocking acetylcholine release from the nerve termini. PLA2 catalyzes the calcium-dependent hydrolysis of the 2-acyl groups in 3-sn-phosphoglycerides. This Bungarus fasciatus (Banded krait) protein is Basic phospholipase A2 Vb-2.